A 121-amino-acid polypeptide reads, in one-letter code: Apoptin (121 aa).

Disordered regions lie at residues 1–28 (MNAH…LETP) and 57–95 (LRSA…PSEY). Polar residues predominate over residues 58-70 (RSATADNSENTGF).

This sequence belongs to the gyrovirus apoptin family.

It localises to the host nucleus. Functionally, may act as transcriptional regulator. Induces apoptosis in infected cells. Element of infectious replication cycle. This chain is Apoptin (VP3), found in Gallus gallus (Chicken).